A 368-amino-acid polypeptide reads, in one-letter code: Interferon-stimulated 20 kDa exonuclease-like 2 (368 aa).

Disordered stretches follow at residues Phe-33–Lys-107 and Pro-127–Pro-187. The segment covering Lys-42–Asn-54 has biased composition (polar residues). The segment covering Lys-77–Ala-96 has biased composition (basic and acidic residues). Residues Ser-131 to Lys-145 show a composition bias toward basic residues. The Exonuclease domain occupies Met-194–Asn-368.

It localises to the nucleus. The protein resides in the nucleolus. Its function is as follows. 3'-&gt; 5'-exoribonuclease involved in ribosome biogenesis in the processing of the 12S pre-rRNA. Displays a strong specificity for a 3'-end containing a free hydroxyl group. The sequence is that of Interferon-stimulated 20 kDa exonuclease-like 2 (Isg20l2) from Mus musculus (Mouse).